The primary structure comprises 363 residues: Alanine racemase (363 aa).

The Proton acceptor; specific for D-alanine role is filled by Lys35. Lys35 carries the N6-(pyridoxal phosphate)lysine modification. Arg134 is a substrate binding site. Residue Tyr259 is the Proton acceptor; specific for L-alanine of the active site. Position 307 (Met307) interacts with substrate.

This sequence belongs to the alanine racemase family. Requires pyridoxal 5'-phosphate as cofactor.

It catalyses the reaction L-alanine = D-alanine. It participates in amino-acid biosynthesis; D-alanine biosynthesis; D-alanine from L-alanine: step 1/1. In terms of biological role, catalyzes the interconversion of L-alanine and D-alanine. May also act on other amino acids. The chain is Alanine racemase (alr) from Shewanella denitrificans (strain OS217 / ATCC BAA-1090 / DSM 15013).